Reading from the N-terminus, the 81-residue chain is MDTSLKNNDGALEADNKNYQDYKDEPDKTSDVLDVTKHNSMVDCCHKNYSTFTSEWYINERKYNDVPEGPKKADVHRCTII.

Residues 1–28 are disordered; sequence MDTSLKNNDGALEADNKNYQDYKDEPDK. Over residues 14-28 the composition is skewed to basic and acidic residues; that stretch reads ADNKNYQDYKDEPDK.

Belongs to the asfivirus L83L family. Interacts with host IL1B.

It is found in the host cytoplasm. May subvert the host innate immune response by interacting with host IL1B and interfering with its function. The protein is Protein L83L of Ornithodoros (relapsing fever ticks).